The primary structure comprises 358 residues: Dual-specificity RNA methyltransferase RlmN (358 aa).

The Proton acceptor role is filled by Glu86. The 234-residue stretch at 105–338 (RHKRYTICVS…CTIRQSKGLD (234 aa)) folds into the Radical SAM core domain. The cysteines at positions 112 and 343 are disulfide-linked. Positions 119, 123, and 126 each coordinate [4Fe-4S] cluster. S-adenosyl-L-methionine contacts are provided by residues 169 to 170 (GE), Ser201, 224 to 226 (SLH), and Asn300. The active-site S-methylcysteine intermediate is the Cys343.

Belongs to the radical SAM superfamily. RlmN family. It depends on [4Fe-4S] cluster as a cofactor.

The protein resides in the cytoplasm. It catalyses the reaction adenosine(2503) in 23S rRNA + 2 reduced [2Fe-2S]-[ferredoxin] + 2 S-adenosyl-L-methionine = 2-methyladenosine(2503) in 23S rRNA + 5'-deoxyadenosine + L-methionine + 2 oxidized [2Fe-2S]-[ferredoxin] + S-adenosyl-L-homocysteine. It carries out the reaction adenosine(37) in tRNA + 2 reduced [2Fe-2S]-[ferredoxin] + 2 S-adenosyl-L-methionine = 2-methyladenosine(37) in tRNA + 5'-deoxyadenosine + L-methionine + 2 oxidized [2Fe-2S]-[ferredoxin] + S-adenosyl-L-homocysteine. Specifically methylates position 2 of adenine 2503 in 23S rRNA and position 2 of adenine 37 in tRNAs. m2A2503 modification seems to play a crucial role in the proofreading step occurring at the peptidyl transferase center and thus would serve to optimize ribosomal fidelity. The polypeptide is Dual-specificity RNA methyltransferase RlmN (Campylobacter hominis (strain ATCC BAA-381 / DSM 21671 / CCUG 45161 / LMG 19568 / NCTC 13146 / CH001A)).